The primary structure comprises 732 residues: MTCTLRDLNSLLEICCRCPAHNPSTAFAPTTKVRVSSDVRGIFALPVQKDHKPYNGLSPEHLETMKAVSLMLDAAGPKLEDGISKAKELLEERINPELMRDALGIYLTHSKDAQQRKIFPPPLKNHPFFSTKTRRPANVAGEICTADTLHGHALLSYWRDDYDLNDSHYYWHMVYRGAGGDNSKNVGDFDRHGEVFLYVHSQMVARYETESLCWSLPLVRPWNQYDDFLENGYAPISSLIEHYGGYPPFSTWYSIRNPDMPDTLNVTIPRARLEEWRDNIYAAIRKGQFETTSKDKPLVLTRDNCLNFVGGILDAQYPSLNKLLGGCSLDEERYGNLHNYGLGKFAEMAYRNKPGEKSPYGLTISNFGAPRDPCFWRWYKHLQYYGRLAATRYPQDITAHRAEVVLSNLVVRLQDRSSPHYLDGHITTFLGPPAVNFMESKAKLGHEPYEWNVQVKSCRRSPPSKENPQTLTLRLFIAAEDLMNDYHSWIEMDRATVQLTDESAITKVRLDTDSSVARKMGNYGEPDPRYASAVFRHGWPQNLMLPVGKVEGMPFVAFCIATDDGIPDPAPAPPFHHYHDPRGMGYPFNRAWTQLTEDSTGKASIRTIISNAELYPFITSTTFKIYRTTKFETKQIIQPTTVTWFNTIRGYFKDADRACMRSEYGYDLYNYDHVMLHADAILDATASKRMPLQMGKYTQDNPDPEHPLWTVKMCENFRAWLLNGCPKGTDPA.

Residues His168, His172, and His200 each contribute to the Zn(2+) site.

Belongs to the tyrosinase family. Requires Zn(2+) as cofactor.

The catalysed reaction is (-)-cyclopenine = viridicatin + methyl isocyanate + H(+). It carries out the reaction (-)-4'-methoxycyclopenine = 4'-methoxyviridicatin + methyl isocyanate + H(+). It functions in the pathway secondary metabolite biosynthesis. Its pathway is alkaloid biosynthesis. The protein operates within mycotoxin biosynthesis. Its function is as follows. Cyclopenase; part of the gene cluster that mediates the biosynthesis of the aspoquinolone mycotoxins. Within the pathway, the cyclopenase asqI catalyzes the conversion of 4'-methoxycyclopenin into 4'-methoxyviridicatin. Cyclopenin can also be converted into viridicatin by asqI. The first step of the pathway is catalyzed by the nonribosomal peptide synthetase asqK that condenses anthranilic acid and O-methyl-L-tyrosine to produce 4'-methoxycyclopeptin. 4'-methoxycyclopeptin is then converted to 4'-methoxydehydrocyclopeptin by the ketoglutarate-dependent dioxygenase asqJ. AsqJ also converts its first product 4'-methoxydehydrocyclopeptin to 4'-methoxycyclopenin. The following conversion of 4'-methoxycyclopenin into 4'-methoxyviridicatin is catalyzed by the cyclopenase asqI. 4'-methoxyviridicatin is the precursor of quinolone natural products, and is further converted to quinolinone B. The prenyltransferase asqH1 then catalyzes the canonical Friedel-Crafts alkylation of quinolinone B with dimethylallyl cation to yield dimethylallyl quinolone, which is subjected to FAD-dependent dehydrogenation by the FAD-linked oxidoreductase asqF to yield conjugated aryl diene. The delta(3') double bond then serves as the site of the second alkylation with DMAPP catalyzed by the prenyltransferase asqH2 to yield a carbenium ion intermediate, which can be attacked by H(2)O to yield a styrenyl quinolone containing a C3'-hydroxyprenyl chain. The FAD-dependent monooxygenase asqG performs epoxidation of the terminal C7'-C8' olefin. Finally, after dehydratation of the epoxide at C3 by asqC, the quinolone epoxide rearrangement protein asqO catalyzes an enzymatic 3-exo-tet cyclization to yield the cyclopropyl-THF ring system in aspoquinolone. The polypeptide is Cyclopenase asqI (Emericella nidulans (strain FGSC A4 / ATCC 38163 / CBS 112.46 / NRRL 194 / M139) (Aspergillus nidulans)).